Consider the following 138-residue polypeptide: Large ribosomal subunit protein bL19 (138 aa).

This sequence belongs to the bacterial ribosomal protein bL19 family.

This protein is located at the 30S-50S ribosomal subunit interface and may play a role in the structure and function of the aminoacyl-tRNA binding site. The sequence is that of Large ribosomal subunit protein bL19 from Rickettsia rickettsii (strain Iowa).